Reading from the N-terminus, the 130-residue chain is Small ribosomal subunit protein uS9 (130 aa).

This sequence belongs to the universal ribosomal protein uS9 family.

This is Small ribosomal subunit protein uS9 from Bordetella bronchiseptica (strain ATCC BAA-588 / NCTC 13252 / RB50) (Alcaligenes bronchisepticus).